A 531-amino-acid chain; its full sequence is T-complex protein 1 subunit zeta-2 (531 aa).

Belongs to the TCP-1 chaperonin family. Component of the chaperonin-containing T-complex (TRiC), a heterooligomeric complex of about 850 to 900 kDa that forms two stacked rings, 12 to 16 nm in diameter. Testis specific.

The protein resides in the cytoplasm. In terms of biological role, component of the chaperonin-containing T-complex (TRiC), a molecular chaperone complex that assists the folding of proteins upon ATP hydrolysis. The sequence is that of T-complex protein 1 subunit zeta-2 (Cct6b) from Mus musculus (Mouse).